Here is a 640-residue protein sequence, read N- to C-terminus: Endoglucanase 1 (640 aa).

Residues 1-24 (MARRGGAAASSSMANLLGVALVLA) form the signal peptide. Aspartate 94 acts as the Nucleophile in catalysis. Active-site residues include histidine 433, aspartate 485, and glutamate 494. N-linked (GlcNAc...) asparagine glycosylation is found at asparagine 528 and asparagine 548.

The protein belongs to the glycosyl hydrolase 9 (cellulase E) family. As to expression, expressed in roots, leaf sheaths and flowers.

It is found in the secreted. The enzyme catalyses Endohydrolysis of (1-&gt;4)-beta-D-glucosidic linkages in cellulose, lichenin and cereal beta-D-glucans.. The sequence is that of Endoglucanase 1 (GLU7) from Oryza sativa subsp. japonica (Rice).